We begin with the raw amino-acid sequence, 172 residues long: Co-chaperone protein HscB (172 aa).

The region spanning 2 to 74 is the J domain; sequence DYFTLFGLPI…LKRAEYMLSL (73 aa).

It belongs to the HscB family. Interacts with HscA and stimulates its ATPase activity. Interacts with IscU.

Functionally, co-chaperone involved in the maturation of iron-sulfur cluster-containing proteins. Seems to help targeting proteins to be folded toward HscA. This chain is Co-chaperone protein HscB, found in Pectobacterium atrosepticum (strain SCRI 1043 / ATCC BAA-672) (Erwinia carotovora subsp. atroseptica).